We begin with the raw amino-acid sequence, 384 residues long: Urea transporter 1 (384 aa).

The segment at 1–23 is disordered; sequence MDDNPTAVKLDQGGNQAPQGQGR. The next 5 helical transmembrane spans lie at 61–81, 85–105, 111–131, 138–158, and 168–188; these read ISQVVFVSNPISGILILVGLL, PWCALNGCVGTVVSTLTALLL, AITAGLQGYNATLVGILMAIY, FWWLLFPVSAMSMTCPIFSSA, and LPVFTLPFNMALSMYLSATGH. The N-linked (GlcNAc...) asparagine glycan is linked to asparagine 206. 3 consecutive transmembrane segments (helical) span residues 237–257, 279–299, and 327–347; these read GGIFLGAILLSSPLMCLHAAI, GLWGFNSSLACIAIGGMFMAL, and VVGLPSCTWPFCLATLLFLLL.

This sequence belongs to the urea transporter family. As to quaternary structure, homotrimer; each subunit contains a pore through which urea permeates. Identified in a complex with STOM.

It is found in the cell membrane. Its subcellular location is the basolateral cell membrane. It carries out the reaction urea(in) = urea(out). Its function is as follows. Mediates the transport of urea driven by a concentration gradient across the cell membranes of erythrocytes and the renal inner medullary collecting duct which is critical to the urinary concentrating mechanism. Facilitates water transport in erythrocytes. The protein is Urea transporter 1 (SLC14A1) of Capra hircus (Goat).